A 275-amino-acid polypeptide reads, in one-letter code: Axoneme-associated protein mst101(3) (275 aa).

12 repeat units span residues 64 to 79 (KKKC…EAAE), 80 to 95 (KKKC…EAAE), 96 to 111 (KKKC…EAAQ), 112 to 127 (KKKC…EAAE), 128 to 143 (KKKC…EAAE), 144 to 159 (RKKC…CEEA), 160 to 175 (AKKK…LQQK), 181 to 196 (KKEK…EEAA), 197 to 212 (KKKA…AEEV), 215 to 230 (KKKA…CAEA), 231 to 246 (KKKA…CEEA), and 249 to 264 (KKMC…CAEA). Residues 64-264 (KKKCAEAAKK…AALQKKCAEA (201 aa)) are 12 X 16 AA tandem repeats of [KRA]-K-[KEM]-[CKA]-[AEKD]-[EA]-[ALE]-[AMK]-[FKAML]-[KQA]-[EQKA]-[KQCEM]-[ECLA]-[AEQ]-[AEQ]-[EQAKV].

In terms of tissue distribution, testis.

Its subcellular location is the cytoplasm. Possible structural role in the sperm tail. This chain is Axoneme-associated protein mst101(3) (mst101(3)), found in Drosophila hydei (Fruit fly).